The following is a 301-amino-acid chain: Ribosomal protein L11 methyltransferase (301 aa).

The S-adenosyl-L-methionine site is built by Thr146, Gly167, Asp189, and Asn237.

The protein belongs to the methyltransferase superfamily. PrmA family.

It localises to the cytoplasm. It catalyses the reaction L-lysyl-[protein] + 3 S-adenosyl-L-methionine = N(6),N(6),N(6)-trimethyl-L-lysyl-[protein] + 3 S-adenosyl-L-homocysteine + 3 H(+). In terms of biological role, methylates ribosomal protein L11. The polypeptide is Ribosomal protein L11 methyltransferase (Prochlorococcus marinus (strain MIT 9313)).